The chain runs to 338 residues: Heat-inducible transcription repressor HrcA (338 aa).

The protein belongs to the HrcA family.

In terms of biological role, negative regulator of class I heat shock genes (grpE-dnaK-dnaJ and groELS operons). Prevents heat-shock induction of these operons. In Nitrosomonas europaea (strain ATCC 19718 / CIP 103999 / KCTC 2705 / NBRC 14298), this protein is Heat-inducible transcription repressor HrcA.